The primary structure comprises 472 residues: Ribulose bisphosphate carboxylase large chain (472 aa).

The substrate site is built by asparagine 116 and threonine 166. Catalysis depends on lysine 168, which acts as the Proton acceptor. Residue lysine 170 coordinates substrate. Mg(2+)-binding residues include lysine 194, aspartate 196, and glutamate 197. Lysine 194 is modified (N6-carboxylysine). The active-site Proton acceptor is the histidine 287. Substrate contacts are provided by arginine 288, histidine 320, and serine 372.

Belongs to the RuBisCO large chain family. Type I subfamily. As to quaternary structure, heterohexadecamer of 8 large chains and 8 small chains. Requires Mg(2+) as cofactor.

The enzyme catalyses 2 (2R)-3-phosphoglycerate + 2 H(+) = D-ribulose 1,5-bisphosphate + CO2 + H2O. It catalyses the reaction D-ribulose 1,5-bisphosphate + O2 = 2-phosphoglycolate + (2R)-3-phosphoglycerate + 2 H(+). Functionally, ruBisCO catalyzes two reactions: the carboxylation of D-ribulose 1,5-bisphosphate, the primary event in carbon dioxide fixation, as well as the oxidative fragmentation of the pentose substrate. Both reactions occur simultaneously and in competition at the same active site. This is Ribulose bisphosphate carboxylase large chain from Nitrobacter vulgaris.